Consider the following 301-residue polypeptide: Golgi to ER traffic protein 2 (301 aa).

The Cytoplasmic segment spans residues Met-1–Leu-167. Positions Ser-42–Val-55 are enriched in low complexity. Residues Ser-42 to Pro-93 are disordered. Residues Leu-56–Asp-67 show a composition bias toward basic and acidic residues. Residues Trp-168 to Tyr-188 form a helical membrane-spanning segment. Residues Thr-189 to Asp-214 are Lumenal-facing. The chain crosses the membrane as a helical span at residues Phe-215 to Phe-234. Residues His-235 to Glu-278 are Cytoplasmic-facing. Residues Leu-279–Phe-299 form a helical membrane-spanning segment. Over Ala-300–Asn-301 the chain is Lumenal.

The protein belongs to the GET2 family. As to quaternary structure, component of the Golgi to ER traffic (GET) complex, which is composed of GET1, GET2 and GET3. Within the complex, GET1 and GET2 form a heterotetramer which is stabilized by phosphatidylinositol binding and which binds to the GET3 homodimer.

The protein localises to the endoplasmic reticulum membrane. It localises to the golgi apparatus membrane. Its function is as follows. Required for the post-translational delivery of tail-anchored (TA) proteins to the endoplasmic reticulum. Together with GET1, acts as a membrane receptor for soluble GET3, which recognizes and selectively binds the transmembrane domain of TA proteins in the cytosol. The GET complex cooperates with the HDEL receptor ERD2 to mediate the ATP-dependent retrieval of resident ER proteins that contain a C-terminal H-D-E-L retention signal from the Golgi to the ER. This chain is Golgi to ER traffic protein 2, found in Candida dubliniensis (strain CD36 / ATCC MYA-646 / CBS 7987 / NCPF 3949 / NRRL Y-17841) (Yeast).